The chain runs to 462 residues: DNA polymerase delta subunit 3 (462 aa).

Residue A2 is modified to N-acetylalanine. Disordered regions lie at residues 144-186, 200-230, 254-384, and 403-462; these read APAE…ASQQ, TKTQDTNKETKPEAREVTSASSAGGKAPGKG, AVKE…RVLK, and SESC…FQKK. The span at 156–174 shows a compositional bias: polar residues; sequence QSNLQAASEAQASELTTNG. Residues 204–215 show a composition bias toward basic and acidic residues; sequence DTNKETKPEARE. The span at 218-230 shows a compositional bias: low complexity; sequence SASSAGGKAPGKG. K256 is covalently cross-linked (Glycyl lysine isopeptide (Lys-Gly) (interchain with G-Cter in SUMO); alternate). K256 is covalently cross-linked (Glycyl lysine isopeptide (Lys-Gly) (interchain with G-Cter in SUMO2); alternate). A Glycyl lysine isopeptide (Lys-Gly) (interchain with G-Cter in SUMO2) cross-link involves residue K259. Positions 284–305 are enriched in basic and acidic residues; sequence RKSEPGKVQQKEKSSRGKRVDL. S306 is subject to Phosphoserine. A compositionally biased stretch (acidic residues) spans 330–344; the sequence is SSEDEVFEDSPEMYE. Pro residues predominate over residues 348–368; it reads PSPPPVSPPPDPMPKTEPPPV. A phosphoserine mark is found at S403 and S405. Phosphothreonine is present on T407. A Phosphoserine modification is found at S409. Over residues 416–427 the composition is skewed to low complexity; the sequence is KPASAHKPPAAA. Positions 428 to 437 are enriched in basic and acidic residues; it reads VKREPREERK. K429 participates in a covalent cross-link: Glycyl lysine isopeptide (Lys-Gly) (interchain with G-Cter in SUMO); alternate. K429 is covalently cross-linked (Glycyl lysine isopeptide (Lys-Gly) (interchain with G-Cter in SUMO2); alternate). Positions 451 to 462 are enriched in polar residues; it reads RQVSITGFFQKK. The PIP-box signature appears at 452 to 459; that stretch reads QVSITGFF. S454 bears the Phosphoserine mark.

As to quaternary structure, component of both the DNA polymerase delta and DNA polymerase zeta complexes. The tetrameric DNA polymerase delta complex (Pol-delta4), which consists of POLD1/p125, POLD2/p50, POLD3/p66/p68 and POLD4/p12, with POLD1 bearing DNA polymerase and 3' to 5' proofreading exonuclease activities. Within this complex, directly interacts with POLD2. Following stress caused by DNA damaging agents or by replication stress, POLD4 is degraded and Pol-delta4 is converted into a trimeric form of the complex (Pol-delta3), which consists of POLD1, POLD2 and POLD3. Pol-delta3 is the major form occurring at S phase replication sites, as well as DNA damage sites. Directly interacts with PCNA, as do POLD1 and POLD4; this interaction stimulates Pol-delta polymerase activity. POLD3 phosphorylation at Ser-454 impairs PCNA binding. Component of the DNA polymerase zeta complex (POLZ), which consists of REV3L, MAD2L2, POLD2 and POLD3, with REV3L bearing DNA polymerase catalytic activity. The DNA polymerase delta complex interacts with POLDIP2; this interaction is probably mediated through direct binding to POLD2. Ubiquitinated, but not targeted to the proteasome. Sumoylated. Sumoylation by SUMO3 may be predominant. In terms of processing, phosphorylation at Ser-454 is thought to decrease the affinity for PCNA and Pol-delta4 processivity. May be phosphorylated by CDK1-cyclin-A complex, as well as CDK2-cyclin-A and CDK2-cyclin-E complexes. PCNA interferes with CDK-cyclin phosphorylation.

The protein localises to the cytoplasm. The protein resides in the nucleus. Its function is as follows. Accessory component of both the DNA polymerase delta complex and the DNA polymerase zeta complex. As a component of the trimeric and tetrameric DNA polymerase delta complexes (Pol-delta3 and Pol-delta4, respectively), plays a role in high fidelity genome replication, including in lagging strand synthesis, and repair. Required for optimal Pol-delta activity. Stabilizes the Pol-delta complex and plays a major role in Pol-delta stimulation by PCNA. Pol-delta3 and Pol-delta4 are characterized by the absence or the presence of POLD4. They exhibit differences in catalytic activity. Most notably, Pol-delta3 shows higher proofreading activity than Pol-delta4. Although both Pol-delta3 and Pol-delta4 process Okazaki fragments in vitro, Pol-delta3 may also be better suited to fulfill this task, exhibiting near-absence of strand displacement activity compared to Pol-delta4 and stalling on encounter with the 5'-blocking oligonucleotides. Pol-delta3 idling process may avoid the formation of a gap, while maintaining a nick that can be readily ligated. Along with DNA polymerase kappa, DNA polymerase delta carries out approximately half of nucleotide excision repair (NER) synthesis following UV irradiation. In this context, POLD3, along with PCNA and RFC1-replication factor C complex, is required to recruit POLD1, the catalytic subunit of the polymerase delta complex, to DNA damage sites. Under conditions of DNA replication stress, required for the repair of broken replication forks through break-induced replication (BIR). Involved in the translesion synthesis (TLS) of templates carrying O6-methylguanine or abasic sites performed by Pol-delta4, independently of DNA polymerase zeta (REV3L) or eta (POLH). Facilitates abasic site bypass by DNA polymerase delta by promoting extension from the nucleotide inserted opposite the lesion. Also involved in TLS, as a component of the tetrameric DNA polymerase zeta complex. Along with POLD2, dramatically increases the efficiency and processivity of DNA synthesis of the DNA polymerase zeta complex compared to the minimal zeta complex, consisting of only REV3L and REV7. The protein is DNA polymerase delta subunit 3 (Pold3) of Mus musculus (Mouse).